We begin with the raw amino-acid sequence, 159 residues long: Small ribosomal subunit protein uS9 (159 aa).

It belongs to the universal ribosomal protein uS9 family.

The protein is Small ribosomal subunit protein uS9 of Methylocella silvestris (strain DSM 15510 / CIP 108128 / LMG 27833 / NCIMB 13906 / BL2).